A 174-amino-acid polypeptide reads, in one-letter code: ATP-dependent protease subunit HslV (174 aa).

Residue Thr-2 is part of the active site. The Na(+) site is built by Gly-157, Cys-160, and Thr-163.

The protein belongs to the peptidase T1B family. HslV subfamily. As to quaternary structure, a double ring-shaped homohexamer of HslV is capped on each side by a ring-shaped HslU homohexamer. The assembly of the HslU/HslV complex is dependent on binding of ATP.

The protein localises to the cytoplasm. The catalysed reaction is ATP-dependent cleavage of peptide bonds with broad specificity.. Its activity is regulated as follows. Allosterically activated by HslU binding. Functionally, protease subunit of a proteasome-like degradation complex believed to be a general protein degrading machinery. The protein is ATP-dependent protease subunit HslV of Shewanella frigidimarina (strain NCIMB 400).